The sequence spans 292 residues: Large ribosomal subunit protein bL19m (292 aa).

The tract at residues 40–61 (PVRQQSTGPSEPGAFQPPPKPV) is disordered. Ser-77 is subject to Phosphoserine.

The protein belongs to the bacterial ribosomal protein bL19 family. Component of the mitochondrial ribosome large subunit (39S) which comprises a 16S rRNA and about 50 distinct proteins.

The protein resides in the mitochondrion. This is Large ribosomal subunit protein bL19m (MRPL19) from Pongo abelii (Sumatran orangutan).